The sequence spans 337 residues: RNA 3'-terminal phosphate cyclase (337 aa).

ATP is bound by residues Q101 and 282 to 285 (HMSD). H306 serves as the catalytic Tele-AMP-histidine intermediate.

Belongs to the RNA 3'-terminal cyclase family. Type 1 subfamily.

The protein resides in the cytoplasm. It catalyses the reaction a 3'-end 3'-phospho-ribonucleotide-RNA + ATP = a 3'-end 2',3'-cyclophospho-ribonucleotide-RNA + AMP + diphosphate. Catalyzes the conversion of 3'-phosphate to a 2',3'-cyclic phosphodiester at the end of RNA. The mechanism of action of the enzyme occurs in 3 steps: (A) adenylation of the enzyme by ATP; (B) transfer of adenylate to an RNA-N3'P to produce RNA-N3'PP5'A; (C) and attack of the adjacent 2'-hydroxyl on the 3'-phosphorus in the diester linkage to produce the cyclic end product. The biological role of this enzyme is unknown but it is likely to function in some aspects of cellular RNA processing. This chain is RNA 3'-terminal phosphate cyclase, found in Saccharolobus islandicus (strain M.16.27) (Sulfolobus islandicus).